The following is a 401-amino-acid chain: Beta-ketoadipyl-CoA thiolase (401 aa).

The Acyl-thioester intermediate role is filled by Cys91. Residues His357 and Cys387 each act as proton acceptor in the active site.

Belongs to the thiolase-like superfamily. Thiolase family. As to quaternary structure, homotetramer.

It catalyses the reaction succinyl-CoA + acetyl-CoA = 3-oxoadipyl-CoA + CoA. Its pathway is aromatic compound metabolism; beta-ketoadipate pathway; acetyl-CoA and succinyl-CoA from 3-oxoadipate: step 2/2. Functionally, catalyzes thiolytic cleavage of beta-ketoadipyl-CoA to succinyl-CoA and acetyl-CoA. This Pseudomonas knackmussii (strain DSM 6978 / CCUG 54928 / LMG 23759 / B13) protein is Beta-ketoadipyl-CoA thiolase (pcaF).